Reading from the N-terminus, the 415-residue chain is U-box domain-containing protein 29 (415 aa).

The region spanning 11–85 (TVPSFFKCPI…NIWSDSIGRR (75 aa)) is the U-box domain. ARM repeat units follow at residues 221 to 263 (KSKL…TISK) and 265 to 307 (KRVR…TLSS).

In terms of assembly, binds to SD129 and SD25.

The enzyme catalyses S-ubiquitinyl-[E2 ubiquitin-conjugating enzyme]-L-cysteine + [acceptor protein]-L-lysine = [E2 ubiquitin-conjugating enzyme]-L-cysteine + N(6)-ubiquitinyl-[acceptor protein]-L-lysine.. The protein operates within protein modification; protein ubiquitination. Functionally, functions as an E3 ubiquitin ligase. The chain is U-box domain-containing protein 29 (PUB29) from Arabidopsis thaliana (Mouse-ear cress).